The primary structure comprises 495 residues: uncharacterized protein (495 aa).

Residues M1–A17 form the signal peptide.

This is an uncharacterized protein from Aquifex aeolicus (strain VF5).